The primary structure comprises 347 residues: D-alanine--D-alanine ligase (347 aa).

The ATP-grasp domain maps to 131–333; it reads KRVLESAGIA…YPELIERLVD (203 aa). Residue 161 to 216 coordinates ATP; that stretch reads EEKLAYPVFAKPSNMGSSVGISKSENQEELRQALKLAFRYDSRVLVEQGVNAREIE. The Mg(2+) site is built by Asp287, Glu300, and Asn302.

This sequence belongs to the D-alanine--D-alanine ligase family. The cofactor is Mg(2+). Mn(2+) is required as a cofactor.

It is found in the cytoplasm. It catalyses the reaction 2 D-alanine + ATP = D-alanyl-D-alanine + ADP + phosphate + H(+). Its pathway is cell wall biogenesis; peptidoglycan biosynthesis. Its function is as follows. Cell wall formation. This Streptococcus pneumoniae (strain P1031) protein is D-alanine--D-alanine ligase.